The following is a 501-amino-acid chain: Probable cysteine desulfurase, mitochondrial (501 aa).

Pyridoxal 5'-phosphate contacts are provided by residues 172 to 173 (AT), Asn-252, Gln-280, and 300 to 302 (SAH). Lys-303 bears the N6-(pyridoxal phosphate)lysine mark. A pyridoxal 5'-phosphate-binding site is contributed by Thr-340. Catalysis depends on Cys-425, which acts as the Cysteine persulfide intermediate. Residue Cys-425 participates in [2Fe-2S] cluster binding.

Belongs to the class-V pyridoxal-phosphate-dependent aminotransferase family. NifS/IscS subfamily. The cofactor is pyridoxal 5'-phosphate.

It localises to the mitochondrion. It carries out the reaction (sulfur carrier)-H + L-cysteine = (sulfur carrier)-SH + L-alanine. Its function is as follows. Catalyzes the removal of elemental sulfur from cysteine to produce alanine. It supplies the inorganic sulfur for iron-sulfur (Fe-S) clusters. Plays a role in both tRNA-processing and mitochondrial metabolism. Involved in the 2-thio-modification of both 5-carboxymethylaminomethyl-2-thiouridine in mitochondrial tRNAs and 5-methoxycarbonylmethyl-2-thiouridine (mcm5s2U) in cytoplasmic tRNAs. The chain is Probable cysteine desulfurase, mitochondrial from Schizosaccharomyces pombe (strain 972 / ATCC 24843) (Fission yeast).